The primary structure comprises 429 residues: Trigger factor (429 aa).

A PPIase FKBP-type domain is found at 161–246 (GDRLSIDFKG…INEIASPKEL (86 aa)).

Belongs to the FKBP-type PPIase family. Tig subfamily.

The protein localises to the cytoplasm. It catalyses the reaction [protein]-peptidylproline (omega=180) = [protein]-peptidylproline (omega=0). Its function is as follows. Involved in protein export. Acts as a chaperone by maintaining the newly synthesized protein in an open conformation. Functions as a peptidyl-prolyl cis-trans isomerase. The chain is Trigger factor from Vesicomyosocius okutanii subsp. Calyptogena okutanii (strain HA).